Consider the following 159-residue polypeptide: SsrA-binding protein (159 aa).

It belongs to the SmpB family.

The protein resides in the cytoplasm. Required for rescue of stalled ribosomes mediated by trans-translation. Binds to transfer-messenger RNA (tmRNA), required for stable association of tmRNA with ribosomes. tmRNA and SmpB together mimic tRNA shape, replacing the anticodon stem-loop with SmpB. tmRNA is encoded by the ssrA gene; the 2 termini fold to resemble tRNA(Ala) and it encodes a 'tag peptide', a short internal open reading frame. During trans-translation Ala-aminoacylated tmRNA acts like a tRNA, entering the A-site of stalled ribosomes, displacing the stalled mRNA. The ribosome then switches to translate the ORF on the tmRNA; the nascent peptide is terminated with the 'tag peptide' encoded by the tmRNA and targeted for degradation. The ribosome is freed to recommence translation, which seems to be the essential function of trans-translation. The sequence is that of SsrA-binding protein from Coxiella burnetii (strain RSA 331 / Henzerling II).